A 434-amino-acid polypeptide reads, in one-letter code: Cyclic 2,3-diphosphoglycerate synthetase (434 aa).

The protein belongs to the cyclic 2,3-diphosphoglycerate synthetase family.

Its subcellular location is the cytoplasm. It catalyses the reaction (2R)-2,3-bisphosphoglycerate + ATP + H(+) = cyclic (2R)-2,3-bisphosphoglycerate + ADP + phosphate. In terms of biological role, catalyzes the formation of cyclic 2,3-diphosphoglycerate (cDPG) by formation of an intramolecular phosphoanhydride bond at the expense of ATP. The polypeptide is Cyclic 2,3-diphosphoglycerate synthetase (Thermococcus sibiricus (strain DSM 12597 / MM 739)).